The sequence spans 307 residues: Elongation factor Ts (307 aa).

An involved in Mg(2+) ion dislocation from EF-Tu region spans residues 79–82 (TDFV).

The protein belongs to the EF-Ts family.

The protein resides in the cytoplasm. Associates with the EF-Tu.GDP complex and induces the exchange of GDP to GTP. It remains bound to the aminoacyl-tRNA.EF-Tu.GTP complex up to the GTP hydrolysis stage on the ribosome. The chain is Elongation factor Ts from Rhizobium meliloti (strain 1021) (Ensifer meliloti).